Reading from the N-terminus, the 81-residue chain is Sec-independent protein translocase protein TatA (81 aa).

A helical transmembrane segment spans residues 1–21 (MGGLQPWHWVIVIAVFVLLFG). Residues 46–56 (MQAESKGDEPK) are compositionally biased toward basic and acidic residues. The interval 46–81 (MQAESKGDEPKPATPIASERVDTTAPEQQSTDRHTA) is disordered.

Belongs to the TatA/E family. The Tat system comprises two distinct complexes: a TatABC complex, containing multiple copies of TatA, TatB and TatC subunits, and a separate TatA complex, containing only TatA subunits. Substrates initially bind to the TatABC complex, which probably triggers association of the separate TatA complex to form the active translocon.

It localises to the cell membrane. In terms of biological role, part of the twin-arginine translocation (Tat) system that transports large folded proteins containing a characteristic twin-arginine motif in their signal peptide across membranes. TatA could form the protein-conducting channel of the Tat system. In Mycolicibacterium smegmatis (strain ATCC 700084 / mc(2)155) (Mycobacterium smegmatis), this protein is Sec-independent protein translocase protein TatA.